A 355-amino-acid chain; its full sequence is Cyclic nucleotide-gated potassium channel mll3241 (355 aa).

Residues 1–12 are Cytoplasmic-facing; it reads MSVLPFLRIYAP. The chain crosses the membrane as a helical span at residues 13 to 30; it reads LNAVLAAPGLLAVAALTI. The Periplasmic portion of the chain corresponds to 31–38; the sequence is PDMSGRSR. The chain crosses the membrane as a helical span at residues 39 to 61; sequence LALAALLAVIWGAYLLQLAATLL. The Cytoplasmic segment spans residues 62-74; that stretch reads KRRAGVVRDRTPK. A helical transmembrane segment spans residues 75–94; it reads IAIDVLAVLVPLAAFLLDGS. Residues 95–112 traverse the membrane as a helical segment; the sequence is PDWSLYCAVWLLKPLRDS. Topologically, residues 113 to 129 are cytoplasmic; sequence TFFPVLGRVLANEARNL. A helical membrane pass occupies residues 130-150; the sequence is IGVTTLFGVVLFAVALAAYVI. Over 151–161 the chain is Periplasmic; the sequence is ERDIQPEKFGS. The segment at residues 162-180 is an intramembrane region (pore-forming); the sequence is IPQAMWWAVVTLSTTGYGD. The Selectivity filter motif lies at 175 to 180; sequence TTGYGD. Residues 181–185 are Periplasmic-facing; the sequence is TIPQS. A helical transmembrane segment spans residues 186 to 210; the sequence is FAGRVLAGAVMMSGIGIFGLWAGIL. Topologically, residues 211–355 are cytoplasmic; the sequence is ATGFYQEVRR…LERRGAAASA (145 aa). 3',5'-cyclic AMP contacts are provided by residues 297–298, 307–308, and Arg348; these read GE and RS.

Belongs to the potassium channel family. Homotetramer.

The protein resides in the cell membrane. Cyclic nucleotide-regulated potassium channel activated by cAMP. The protein is Cyclic nucleotide-gated potassium channel mll3241 of Mesorhizobium japonicum (strain LMG 29417 / CECT 9101 / MAFF 303099) (Mesorhizobium loti (strain MAFF 303099)).